We begin with the raw amino-acid sequence, 58 residues long: Photosystem II reaction center protein K (58 aa).

Residues 1–21 (MFDLYLKNLLDLSDSGTVVLA) constitute a propeptide that is removed on maturation. A helical transmembrane segment spans residues 29–49 (IFDPIVDVLPVIPVFFLLLAF).

This sequence belongs to the PsbK family. PSII is composed of 1 copy each of membrane proteins PsbA, PsbB, PsbC, PsbD, PsbE, PsbF, PsbH, PsbI, PsbJ, PsbK, PsbL, PsbM, PsbT, PsbX, PsbY, PsbZ, Psb30/Ycf12, at least 3 peripheral proteins of the oxygen-evolving complex and a large number of cofactors. It forms dimeric complexes.

The protein localises to the plastid. It localises to the chloroplast thylakoid membrane. One of the components of the core complex of photosystem II (PSII). PSII is a light-driven water:plastoquinone oxidoreductase that uses light energy to abstract electrons from H(2)O, generating O(2) and a proton gradient subsequently used for ATP formation. It consists of a core antenna complex that captures photons, and an electron transfer chain that converts photonic excitation into a charge separation. This Zygnema circumcarinatum (Green alga) protein is Photosystem II reaction center protein K.